The primary structure comprises 707 residues: Translation initiation factor eIF2B subunit epsilon (707 aa).

2 disordered regions span residues 489 to 526 (HDDI…SVKF) and 686 to 707 (AEEE…DESD). In terms of domain architecture, W2 spans 516 to 693 (DNPIEPDSVK…KSAEEESDDS (178 aa)). Over residues 688 to 707 (EESDDSDDSDDDDDDSDESD) the composition is skewed to acidic residues.

This sequence belongs to the eIF-2B gamma/epsilon subunits family. As to quaternary structure, component of the translation initiation factor 2B (eIF2B) complex which is a heterodecamer of two sets of five different subunits: alpha, beta, gamma, delta and epsilon. Subunits alpha, beta and delta comprise a regulatory subcomplex and subunits epsilon and gamma comprise a catalytic subcomplex. Within the complex, the hexameric regulatory complex resides at the center, with the two heterodimeric catalytic subcomplexes bound on opposite sides.

The protein resides in the cytoplasm. It localises to the cytosol. Functionally, acts as a component of the translation initiation factor 2B (eIF2B) complex, which catalyzes the exchange of GDP for GTP on eukaryotic initiation factor 2 (eIF2) gamma subunit. Its guanine nucleotide exchange factor activity is repressed when bound to eIF2 complex phosphorylated on the alpha subunit, thereby limiting the amount of methionyl-initiator methionine tRNA available to the ribosome and consequently global translation is repressed. This Dictyostelium discoideum (Social amoeba) protein is Translation initiation factor eIF2B subunit epsilon (eif2b5).